Consider the following 249-residue polypeptide: Triosephosphate isomerase (249 aa).

9–11 provides a ligand contact to substrate; sequence NWK. The Electrophile role is filled by His94. The active-site Proton acceptor is the Glu166. Substrate-binding positions include Gly172, Ser212, and 233–234; that span reads GG.

Belongs to the triosephosphate isomerase family. As to quaternary structure, homodimer.

The protein resides in the cytoplasm. It carries out the reaction D-glyceraldehyde 3-phosphate = dihydroxyacetone phosphate. It functions in the pathway carbohydrate biosynthesis; gluconeogenesis. The protein operates within carbohydrate degradation; glycolysis; D-glyceraldehyde 3-phosphate from glycerone phosphate: step 1/1. Its function is as follows. Involved in the gluconeogenesis. Catalyzes stereospecifically the conversion of dihydroxyacetone phosphate (DHAP) to D-glyceraldehyde-3-phosphate (G3P). The sequence is that of Triosephosphate isomerase from Treponema pallidum (strain Nichols).